We begin with the raw amino-acid sequence, 238 residues long: Opacity protein opA66 (238 aa).

A signal peptide is located at residue A1. Disordered stretches follow at residues 88 to 109 (NLQR…QENG) and 162 to 183 (GARG…AHQE). Positions 168-183 (PTVSSPYKNTQDAHQE) are enriched in polar residues.

This sequence belongs to the opacity porin family.

It is found in the cell outer membrane. Its function is as follows. Implicated in a number of adherence functions. OPA proteins are implicated in pathogenesis and are subject to phase variation. In Neisseria gonorrhoeae, this protein is Opacity protein opA66.